Here is a 240-residue protein sequence, read N- to C-terminus: UDP-2,3-diacylglucosamine hydrolase (240 aa).

Mn(2+) is bound by residues aspartate 7, histidine 9, aspartate 40, asparagine 78, and histidine 113. 78-79 lines the substrate pocket; it reads NR. Residues aspartate 121, serine 159, lysine 166, and histidine 194 each contribute to the substrate site. Residues histidine 194 and histidine 196 each contribute to the Mn(2+) site.

Belongs to the LpxH family. It depends on Mn(2+) as a cofactor.

The protein resides in the cell inner membrane. The catalysed reaction is UDP-2-N,3-O-bis[(3R)-3-hydroxytetradecanoyl]-alpha-D-glucosamine + H2O = 2-N,3-O-bis[(3R)-3-hydroxytetradecanoyl]-alpha-D-glucosaminyl 1-phosphate + UMP + 2 H(+). It functions in the pathway glycolipid biosynthesis; lipid IV(A) biosynthesis; lipid IV(A) from (3R)-3-hydroxytetradecanoyl-[acyl-carrier-protein] and UDP-N-acetyl-alpha-D-glucosamine: step 4/6. Functionally, hydrolyzes the pyrophosphate bond of UDP-2,3-diacylglucosamine to yield 2,3-diacylglucosamine 1-phosphate (lipid X) and UMP by catalyzing the attack of water at the alpha-P atom. Involved in the biosynthesis of lipid A, a phosphorylated glycolipid that anchors the lipopolysaccharide to the outer membrane of the cell. This chain is UDP-2,3-diacylglucosamine hydrolase, found in Pseudomonas putida (strain ATCC 47054 / DSM 6125 / CFBP 8728 / NCIMB 11950 / KT2440).